Consider the following 591-residue polypeptide: N-acetylgalactosaminyltransferase 7 (591 aa).

The Cytoplasmic portion of the chain corresponds to 1 to 11 (MRVSTIRSGRI). Residues 12-29 (CRLALCLLVLLPLLYLLA) form a helical; Signal-anchor for type II membrane protein membrane-spanning segment. N30 carries N-linked (GlcNAc...) asparagine glycosylation. Topologically, residues 30–591 (NWSDHHKRVQ…WWFKEIRPRW (562 aa)) are lumenal. A disordered region spans residues 68–100 (DGLGNFEPKDVKPRSGPGENGEAHSLSPDKKHM). 5 disulfides stabilise this stretch: C132–C367, C358–C441, C479–C496, C519–C532, and C558–C573. The interval 141-251 (LPRTSVIIVF…TNWLPPLLAP (111 aa)) is catalytic subdomain A. Substrate contacts are provided by D182 and R212. The Mn(2+) site is built by D235 and H237. The tract at residues 313 to 375 (PYRSPTHAGG…PCSRVGHVYR (63 aa)) is catalytic subdomain B. W344 is a binding site for substrate. Residue H372 coordinates Mn(2+). Substrate is bound by residues R375 and Y380. The 120-residue stretch at 466–585 (LHWGELRSVA…NDSYQQWWFK (120 aa)) folds into the Ricin B-type lectin domain. N576 carries an N-linked (GlcNAc...) asparagine glycan.

The protein belongs to the glycosyltransferase 2 family. GalNAc-T subfamily. Requires Mn(2+) as cofactor. Expressed in developing oocytes and egg chambers. During embryonic stages 9-11, expressed in the primordium of the foregut, midgut and hindgut. Expressed in the salivary glands from embryonic stage 12 onwards. During embryonic stages 12-13, expressed in the posterior midgut and hindgut. During embryonic stages 14-15, expression continues in the hindgut. During embryonic stages 16-17, expressed in the antennomaxillary complex. In third instar larvae, ubiquitously expressed in wing, with increased expression in the notum and ventral wing pouch, eye-antennal, leg and haltere imaginal disks.

The protein localises to the golgi apparatus membrane. The enzyme catalyses L-seryl-[protein] + UDP-N-acetyl-alpha-D-galactosamine = a 3-O-[N-acetyl-alpha-D-galactosaminyl]-L-seryl-[protein] + UDP + H(+). It catalyses the reaction L-threonyl-[protein] + UDP-N-acetyl-alpha-D-galactosamine = a 3-O-[N-acetyl-alpha-D-galactosaminyl]-L-threonyl-[protein] + UDP + H(+). Its pathway is protein modification; protein glycosylation. Glycopeptide transferase involved in O-linked oligosaccharide biosynthesis, which catalyzes the transfer of an N-acetyl-D-galactosamine residue to an already glycosylated peptide. In contrast to other proteins of the family, it does not act as a peptide transferase that transfers GalNAc onto serine or threonine residue on the protein receptor, but instead requires the prior addition of a GalNAc on a peptide before adding additional GalNAc moieties. Some peptide transferase activity is however not excluded, considering that its appropriate peptide substrate may remain unidentified. Prefers the monoglycosylated Muc5AC-3 as substrate. Might have a role in protein O-glycosylation in the Golgi and thereby in establishing and/or maintaining a proper secretory apparatus structure. The chain is N-acetylgalactosaminyltransferase 7 from Drosophila melanogaster (Fruit fly).